The sequence spans 371 residues: MPEITHRKNTRPVKVGDLTIGGSNELVIQSMTTTKTHDVEATVAEIKRLEEAGCQIVRVACPKEEDALAIAEIKKQINIPLVVDIHFDYKLALLAIEGGADKIRINPGNIGRREKVEEVVKACKAKGIPIRIGVNAGSLEKHILKKYGYPTADGMVESALHHIKILEDLDFHDIIVSMKASDVNLAIEAYTKAAQAFDYPLHLGITESGTLFAGTVKSAAGLGAIMSLGIGNTLRISLSADPVEEVKVARELLKSFGLASNAATLISCPTCGRIEIDLISIANEVEEYISTIKAPLKVAVLGCAVNGPGEAREADIGIAGARGEGLLFMKGKTVRKVPEETMVEELKMEIDKLAEEYFKKQEAEKLANAEK.

The [4Fe-4S] cluster site is built by Cys268, Cys271, Cys303, and Glu310.

The protein belongs to the IspG family. [4Fe-4S] cluster serves as cofactor.

The catalysed reaction is (2E)-4-hydroxy-3-methylbut-2-enyl diphosphate + oxidized [flavodoxin] + H2O + 2 H(+) = 2-C-methyl-D-erythritol 2,4-cyclic diphosphate + reduced [flavodoxin]. Its pathway is isoprenoid biosynthesis; isopentenyl diphosphate biosynthesis via DXP pathway; isopentenyl diphosphate from 1-deoxy-D-xylulose 5-phosphate: step 5/6. Functionally, converts 2C-methyl-D-erythritol 2,4-cyclodiphosphate (ME-2,4cPP) into 1-hydroxy-2-methyl-2-(E)-butenyl 4-diphosphate. The sequence is that of 4-hydroxy-3-methylbut-2-en-1-yl diphosphate synthase (flavodoxin) from Macrococcus caseolyticus (strain JCSC5402) (Macrococcoides caseolyticum).